Consider the following 404-residue polypeptide: MKYSAVLVAALAAIADATIPIPKGGVPGQPIQESGKGAVFSGGTNNQLDLQNPSNIGGQPATDNGLVPNMKWSFSLSKTRMLYGGWIREQVIQDLPTSHDIAGAQVHLIKGGIRQMHWHRVAEWAYIYAGSFLISAVTEDGQFQLDKLGVGDMYYFPKGAAHSLQGLEDENEILLIFDDGDFDRVGTTFMVADWISHTPKDVLAKNFGVPPSTFDKTYNPDLALINSTISTKTVEGGNGALTGNSSYTFHISNAPEIQVPGGGGTIQVVDSKNFPVSKTIACAVVRLKPGGMRELHWHPTAEEWLYFHSGNARATVYIGGGLARTFDFTAGDAGVFPDNSGHYIENTSETEELIYLELYKADRVADVSLSQWLALTPSDIAAAAINVPIEVIEQIKKEKQYIVS.

A signal peptide spans 1–17 (MKYSAVLVAALAAIADA). Positions 74–215 (FSLSKTRMLY…NFGVPPSTFD (142 aa)) constitute a Cupin type-1 1 domain. Residues His-117, His-119, Glu-123, and His-162 each contribute to the Mn(2+) site. N-linked (GlcNAc...) asparagine glycans are attached at residues Asn-226 and Asn-244. The region spanning 249–393 (FHISNAPEIQ…AINVPIEVIE (145 aa)) is the Cupin type-1 2 domain. Residues His-296, His-298, Glu-303, and His-342 each coordinate Mn(2+). Asn-346 carries N-linked (GlcNAc...) asparagine glycosylation. The active-site Proton donor is the Glu-357.

Mn(2+) is required as a cofactor.

It is found in the secreted. The enzyme catalyses oxalate + H(+) = formate + CO2. Functionally, converts oxalate to formate and CO(2) in an O(2)-dependent reaction. Can also catalyze minor side reactions: oxalate oxidation to produce H(2)O(2), and oxalate-dependent, H(2)O(2)-independent dye oxidations. This is Probable oxalate decarboxylase ARB_04859 from Arthroderma benhamiae (strain ATCC MYA-4681 / CBS 112371) (Trichophyton mentagrophytes).